Reading from the N-terminus, the 126-residue chain is Holo-[acyl-carrier-protein] synthase (126 aa).

Mg(2+)-binding residues include aspartate 9 and glutamate 58.

This sequence belongs to the P-Pant transferase superfamily. AcpS family. Requires Mg(2+) as cofactor.

It is found in the cytoplasm. The catalysed reaction is apo-[ACP] + CoA = holo-[ACP] + adenosine 3',5'-bisphosphate + H(+). Transfers the 4'-phosphopantetheine moiety from coenzyme A to a Ser of acyl-carrier-protein. This is Holo-[acyl-carrier-protein] synthase from Escherichia coli O139:H28 (strain E24377A / ETEC).